The following is a 293-amino-acid chain: Elongation factor Ts (293 aa).

The segment at 79–82 (TDFV) is involved in Mg(2+) ion dislocation from EF-Tu.

Belongs to the EF-Ts family.

The protein localises to the cytoplasm. Associates with the EF-Tu.GDP complex and induces the exchange of GDP to GTP. It remains bound to the aminoacyl-tRNA.EF-Tu.GTP complex up to the GTP hydrolysis stage on the ribosome. The polypeptide is Elongation factor Ts (Exiguobacterium sibiricum (strain DSM 17290 / CCUG 55495 / CIP 109462 / JCM 13490 / 255-15)).